Here is a 299-residue protein sequence, read N- to C-terminus: Tyrosine recombinase XerD (299 aa).

One can recognise a Core-binding (CB) domain in the interval 3-88; sequence QQDNPLIEQF…AMRRLFQYLY (86 aa). Positions 109 to 293 constitute a Tyr recombinase domain; that stretch reads RLPKDLSEAQ…ATERLRQLHQ (185 aa). Catalysis depends on residues Arg149, Lys173, His245, Arg248, and His271. Residue Tyr280 is the O-(3'-phospho-DNA)-tyrosine intermediate of the active site.

It belongs to the 'phage' integrase family. XerD subfamily. As to quaternary structure, forms a cyclic heterotetrameric complex composed of two molecules of XerC and two molecules of XerD, in which XerC interacts with XerD via its C-terminal region, XerD interacts with XerC via its C-terminal region and so on.

The protein resides in the cytoplasm. FtsK may regulate the catalytic switch between XerC and XerD in the heterotetrameric complex during the two steps of the recombination process. Site-specific tyrosine recombinase, which acts by catalyzing the cutting and rejoining of the recombining DNA molecules. Binds cooperatively to specific DNA consensus sequences that are separated from XerC binding sites by a short central region, forming the heterotetrameric XerC-XerD complex that recombines DNA substrates. The complex is essential to convert dimers of the bacterial chromosome into monomers to permit their segregation at cell division. It also contributes to the segregational stability of plasmids. In the complex XerD specifically exchanges the bottom DNA strands. The chain is Tyrosine recombinase XerD from Yersinia pestis.